A 434-amino-acid polypeptide reads, in one-letter code: F-box/LRR-repeat protein 21 (434 aa).

An F-box domain is found at 39–85; the sequence is LLDWGTLPHHVILQIFQYLPLIDRARASSVCRRWNEVFHIPDLWRKF. 6 LRR repeats span residues 187-213, 214-239, 242-265, 322-347, 349-374, and 375-400; these read DTPV…KMSS, CPHV…ALNY, LSDE…RIDV, GRSV…VVCA, GLLP…GLSE, and CEVS…SIME.

In terms of assembly, part of the SCF (SKP1-CUL1-F-box) E3 ubiquitin-protein ligase complex SCF(FBXL21) composed of CUL1, SKP1, RBX1 and FBXL21. Interacts with CRY1 and CRY2. Expressed in the hypothalamus, especially in the suprachiasmatic nucleus (SCN). Expression is driven by the core-clock. There is a pronounced diurnal and circadian expression rhythms rising rapidly at the start of the day and declining at the onset of the night.

Its subcellular location is the cytoplasm. It is found in the cytosol. The protein localises to the nucleus. It functions in the pathway protein modification; protein ubiquitination. Its function is as follows. Substrate-recognition component of the SCF(FBXL21) E3 ubiquitin ligase complex involved in circadian rhythm function. Plays a key role in the maintenance of both the speed and the robustness of the circadian clock oscillation. The SCF(FBXL21) complex mainly acts in the cytosol and mediates ubiquitination of CRY proteins (CRY1 and CRY2), leading to CRY proteins stabilization. The SCF(FBXL21) complex counteracts the activity of the SCF(FBXL3) complex and protects CRY proteins from degradation. Involved in the hypothalamic suprachiasmatic nucleus (SCN) clock regulating temporal organization of the daily activities. This is F-box/LRR-repeat protein 21 (Fbxl21) from Mus musculus (Mouse).